A 244-amino-acid chain; its full sequence is Pyridoxine 5'-phosphate synthase (244 aa).

Asparagine 7 is a 3-amino-2-oxopropyl phosphate binding site. 9–10 (DH) contributes to the 1-deoxy-D-xylulose 5-phosphate binding site. Arginine 18 lines the 3-amino-2-oxopropyl phosphate pocket. Histidine 43 acts as the Proton acceptor in catalysis. 1-deoxy-D-xylulose 5-phosphate contacts are provided by arginine 45 and histidine 50. Catalysis depends on glutamate 70, which acts as the Proton acceptor. Threonine 100 is a 1-deoxy-D-xylulose 5-phosphate binding site. Histidine 191 serves as the catalytic Proton donor. Residues glycine 192 and 213 to 214 (GH) contribute to the 3-amino-2-oxopropyl phosphate site.

The protein belongs to the PNP synthase family. In terms of assembly, homooctamer; tetramer of dimers.

The protein localises to the cytoplasm. The enzyme catalyses 3-amino-2-oxopropyl phosphate + 1-deoxy-D-xylulose 5-phosphate = pyridoxine 5'-phosphate + phosphate + 2 H2O + H(+). It participates in cofactor biosynthesis; pyridoxine 5'-phosphate biosynthesis; pyridoxine 5'-phosphate from D-erythrose 4-phosphate: step 5/5. Functionally, catalyzes the complicated ring closure reaction between the two acyclic compounds 1-deoxy-D-xylulose-5-phosphate (DXP) and 3-amino-2-oxopropyl phosphate (1-amino-acetone-3-phosphate or AAP) to form pyridoxine 5'-phosphate (PNP) and inorganic phosphate. The sequence is that of Pyridoxine 5'-phosphate synthase from Laribacter hongkongensis (strain HLHK9).